A 78-amino-acid chain; its full sequence is Large ribosomal subunit protein bL28 (78 aa).

Residues 1-20 are disordered; the sequence is MSRVCQVTGKRPVTGNNRSH.

Belongs to the bacterial ribosomal protein bL28 family.

The chain is Large ribosomal subunit protein bL28 from Vibrio parahaemolyticus serotype O3:K6 (strain RIMD 2210633).